The following is a 197-amino-acid chain: Recombination protein RecR (197 aa).

A C4-type zinc finger spans residues 57 to 72 (CSICFAITEDDPCAIC). Residues 79–174 (GTICVVENSQ…RISRLAHGIP (96 aa)) enclose the Toprim domain.

The protein belongs to the RecR family.

May play a role in DNA repair. It seems to be involved in an RecBC-independent recombinational process of DNA repair. It may act with RecF and RecO. The chain is Recombination protein RecR from Pelobacter propionicus (strain DSM 2379 / NBRC 103807 / OttBd1).